A 449-amino-acid chain; its full sequence is MVRNCLSIVLAAGEGTRMKSPLPKVLHKIAGLPLVCHVIKQIELAGSLQLAVVVGSGAEDITKVVQSFTKNAMIFEQKERLGTAHAVLSARLALQEEVDDILIVFGDTPLIEHSSLVRIRAFLADGADVVVAGFYASDPTGYGRLIKKNGKLITIVEEKDASDEEKKVSLCNGGIMALNGKYALSLLNKIDNNNMQQEYYLTDVVSIASRQNLNIQVVEIPFDNVIGINNCFELFEADALWQKRKARDLMLSGVTILKPESVYFSYDTEIEPGVLIEPNVYFGPGVKIQSGAVIRAFSYLEGAVVGRDAQIGPYARLRFGTELERSVKVGNFCEIKQAKVGEFSKINHLSYIGDTEIGTNTNIGAGAITCNYDGFNKHKTVIDDDVFIGSNSVLVAPLSIGKGSYIASGSVITEDVPINSMVFGRARQVIKEDRAIKLRAHLSKNKRNK.

The pyrophosphorylase stretch occupies residues 1–231; sequence MVRNCLSIVL…FDNVIGINNC (231 aa). UDP-N-acetyl-alpha-D-glucosamine is bound by residues 10–13, Lys-24, Gln-77, and 82–83; these read LAAG and GT. Asp-107 contacts Mg(2+). Residues Gly-143, Glu-157, Asn-172, and Asn-229 each coordinate UDP-N-acetyl-alpha-D-glucosamine. Asn-229 lines the Mg(2+) pocket. The segment at 232–252 is linker; that stretch reads FELFEADALWQKRKARDLMLS. The tract at residues 253–449 is N-acetyltransferase; that stretch reads GVTILKPESV…AHLSKNKRNK (197 aa). Residues Arg-318 and Lys-336 each coordinate UDP-N-acetyl-alpha-D-glucosamine. The active-site Proton acceptor is His-348. 2 residues coordinate UDP-N-acetyl-alpha-D-glucosamine: Tyr-351 and Asn-362. Residues Ala-365, 371-372, Ser-390, Ser-408, and Arg-425 each bind acetyl-CoA; that span reads NY.

The protein in the N-terminal section; belongs to the N-acetylglucosamine-1-phosphate uridyltransferase family. In the C-terminal section; belongs to the transferase hexapeptide repeat family. In terms of assembly, homotrimer. Mg(2+) serves as cofactor.

Its subcellular location is the cytoplasm. It catalyses the reaction alpha-D-glucosamine 1-phosphate + acetyl-CoA = N-acetyl-alpha-D-glucosamine 1-phosphate + CoA + H(+). It carries out the reaction N-acetyl-alpha-D-glucosamine 1-phosphate + UTP + H(+) = UDP-N-acetyl-alpha-D-glucosamine + diphosphate. The protein operates within nucleotide-sugar biosynthesis; UDP-N-acetyl-alpha-D-glucosamine biosynthesis; N-acetyl-alpha-D-glucosamine 1-phosphate from alpha-D-glucosamine 6-phosphate (route II): step 2/2. It functions in the pathway nucleotide-sugar biosynthesis; UDP-N-acetyl-alpha-D-glucosamine biosynthesis; UDP-N-acetyl-alpha-D-glucosamine from N-acetyl-alpha-D-glucosamine 1-phosphate: step 1/1. It participates in bacterial outer membrane biogenesis; LPS lipid A biosynthesis. Its function is as follows. Catalyzes the last two sequential reactions in the de novo biosynthetic pathway for UDP-N-acetylglucosamine (UDP-GlcNAc). The C-terminal domain catalyzes the transfer of acetyl group from acetyl coenzyme A to glucosamine-1-phosphate (GlcN-1-P) to produce N-acetylglucosamine-1-phosphate (GlcNAc-1-P), which is converted into UDP-GlcNAc by the transfer of uridine 5-monophosphate (from uridine 5-triphosphate), a reaction catalyzed by the N-terminal domain. This chain is Bifunctional protein GlmU, found in Bartonella bacilliformis (strain ATCC 35685 / KC583 / Herrer 020/F12,63).